The following is a 276-amino-acid chain: Putative pyruvate, phosphate dikinase regulatory protein (276 aa).

Residue 151–158 (GISRTSKT) participates in ADP binding.

The protein belongs to the pyruvate, phosphate/water dikinase regulatory protein family. PDRP subfamily.

The enzyme catalyses N(tele)-phospho-L-histidyl/L-threonyl-[pyruvate, phosphate dikinase] + ADP = N(tele)-phospho-L-histidyl/O-phospho-L-threonyl-[pyruvate, phosphate dikinase] + AMP + H(+). It catalyses the reaction N(tele)-phospho-L-histidyl/O-phospho-L-threonyl-[pyruvate, phosphate dikinase] + phosphate + H(+) = N(tele)-phospho-L-histidyl/L-threonyl-[pyruvate, phosphate dikinase] + diphosphate. Bifunctional serine/threonine kinase and phosphorylase involved in the regulation of the pyruvate, phosphate dikinase (PPDK) by catalyzing its phosphorylation/dephosphorylation. This chain is Putative pyruvate, phosphate dikinase regulatory protein, found in Streptococcus agalactiae serotype Ia (strain ATCC 27591 / A909 / CDC SS700).